Here is a 137-residue protein sequence, read N- to C-terminus: Cell division protein SepF (137 aa).

Belongs to the SepF family. As to quaternary structure, homodimer. Interacts with FtsZ.

Its subcellular location is the cytoplasm. Functionally, cell division protein that is part of the divisome complex and is recruited early to the Z-ring. Probably stimulates Z-ring formation, perhaps through the cross-linking of FtsZ protofilaments. Its function overlaps with FtsA. The polypeptide is Cell division protein SepF (Carboxydothermus hydrogenoformans (strain ATCC BAA-161 / DSM 6008 / Z-2901)).